We begin with the raw amino-acid sequence, 337 residues long: Probable dual-specificity RNA methyltransferase RlmN (337 aa).

E88 (proton acceptor) is an active-site residue. A Radical SAM core domain is found at 94-324 (SEKRLTVCVS…VRYSRGLATD (231 aa)). C101 and C327 are joined by a disulfide. [4Fe-4S] cluster contacts are provided by C108, C112, and C115. S-adenosyl-L-methionine-binding positions include 155-156 (GE), S185, 208-210 (SLH), and N284. The S-methylcysteine intermediate role is filled by C327.

Belongs to the radical SAM superfamily. RlmN family. It depends on [4Fe-4S] cluster as a cofactor.

The protein resides in the cytoplasm. It catalyses the reaction adenosine(2503) in 23S rRNA + 2 reduced [2Fe-2S]-[ferredoxin] + 2 S-adenosyl-L-methionine = 2-methyladenosine(2503) in 23S rRNA + 5'-deoxyadenosine + L-methionine + 2 oxidized [2Fe-2S]-[ferredoxin] + S-adenosyl-L-homocysteine. The enzyme catalyses adenosine(37) in tRNA + 2 reduced [2Fe-2S]-[ferredoxin] + 2 S-adenosyl-L-methionine = 2-methyladenosine(37) in tRNA + 5'-deoxyadenosine + L-methionine + 2 oxidized [2Fe-2S]-[ferredoxin] + S-adenosyl-L-homocysteine. Its function is as follows. Specifically methylates position 2 of adenine 2503 in 23S rRNA and position 2 of adenine 37 in tRNAs. In Microcystis aeruginosa (strain NIES-843 / IAM M-2473), this protein is Probable dual-specificity RNA methyltransferase RlmN.